We begin with the raw amino-acid sequence, 374 residues long: S-adenosylmethionine:tRNA ribosyltransferase-isomerase (374 aa).

It belongs to the QueA family. As to quaternary structure, monomer.

It localises to the cytoplasm. It carries out the reaction 7-aminomethyl-7-carbaguanosine(34) in tRNA + S-adenosyl-L-methionine = epoxyqueuosine(34) in tRNA + adenine + L-methionine + 2 H(+). The protein operates within tRNA modification; tRNA-queuosine biosynthesis. In terms of biological role, transfers and isomerizes the ribose moiety from AdoMet to the 7-aminomethyl group of 7-deazaguanine (preQ1-tRNA) to give epoxyqueuosine (oQ-tRNA). The sequence is that of S-adenosylmethionine:tRNA ribosyltransferase-isomerase from Prochlorococcus marinus (strain MIT 9301).